The primary structure comprises 211 residues: tRNA (guanine-N(7)-)-methyltransferase (211 aa).

4 residues coordinate S-adenosyl-L-methionine: glutamate 43, glutamate 68, asparagine 95, and aspartate 117. Residue aspartate 117 is part of the active site. Residues lysine 121, aspartate 153, and 190 to 193 (TEYE) each bind substrate.

The protein belongs to the class I-like SAM-binding methyltransferase superfamily. TrmB family.

The enzyme catalyses guanosine(46) in tRNA + S-adenosyl-L-methionine = N(7)-methylguanosine(46) in tRNA + S-adenosyl-L-homocysteine. Its pathway is tRNA modification; N(7)-methylguanine-tRNA biosynthesis. In terms of biological role, catalyzes the formation of N(7)-methylguanine at position 46 (m7G46) in tRNA. This chain is tRNA (guanine-N(7)-)-methyltransferase, found in Alkaliphilus oremlandii (strain OhILAs) (Clostridium oremlandii (strain OhILAs)).